A 364-amino-acid polypeptide reads, in one-letter code: CLIP domain-containing serine protease B15 (364 aa).

The first 19 residues, 1-19, serve as a signal peptide directing secretion; the sequence is MRWLVCLIVSWCSLVPLGA. The region spanning 30–89 is the Clip domain; sequence PCQTPSGTAGTCEPVKNCSYVRKILKSPDFSHYDTTYLDTLKCGDLMVPMRKKPIPLLCC. Intrachain disulfides connect Cys-31–Cys-88, Cys-41–Cys-72, and Cys-47–Cys-89. Asn-46 carries N-linked (GlcNAc...) asparagine glycosylation. Positions 107-359 constitute a Peptidase S1 domain; the sequence is IYFGEETERG…YLDWMETVMF (253 aa). The N-linked (GlcNAc...) asparagine glycan is linked to Asn-131. Cys-137 and Cys-153 are joined by a disulfide. His-152 (charge relay system) is an active-site residue. N-linked (GlcNAc...) asparagine glycans are attached at residues Asn-171, Asn-177, and Asn-206. Asp-212 acts as the Charge relay system in catalysis. A disulfide bridge links Cys-279 with Cys-296. Asn-287 and Asn-301 each carry an N-linked (GlcNAc...) asparagine glycan. The cysteines at positions 306 and 335 are disulfide-linked. The Charge relay system role is filled by Ser-310.

This sequence belongs to the peptidase S1 family. CLIP subfamily. In terms of processing, N-glycosylated. Post-translationally, proteolytically cleaved. In terms of tissue distribution, expressed by a subpopulation of hemocytes.

The protein resides in the secreted. Functionally, serine protease. Plays a role in innate immunity against infections by parasite P.berghei and by Gram-negative bacteria such as E.coli. In response to P.berghei infection, contributes to the clearing of parasite ookinetes independent of melanization, an innate immune response which consists in the deposition of melanin pigments on invading pathogens and parasites. The protein is CLIP domain-containing serine protease B15 of Anopheles gambiae (African malaria mosquito).